The following is a 228-amino-acid chain: RNA pyrophosphohydrolase (228 aa).

The tract at residues 1–70 is unknown; the sequence is MEKRSGIGRL…KQWVKMMNDI (70 aa). Residues 71 to 228 are rppH domain; that stretch reads VIDKRGFRLG…VLTEFAEFIR (158 aa). The Nudix hydrolase domain maps to 76–221; it reads GFRLGVGMVI…KRDVYQKVLT (146 aa). A Nudix box motif is present at residues 109 to 130; sequence GGLLPNETLREALNRELDEEVG.

In the C-terminal section; belongs to the Nudix hydrolase family. RppH subfamily. It depends on a divalent metal cation as a cofactor.

Functionally, accelerates the degradation of transcripts by removing pyrophosphate from the 5'-end of triphosphorylated RNA, leading to a more labile monophosphorylated state that can stimulate subsequent ribonuclease cleavage. The sequence is that of RNA pyrophosphohydrolase from Coxiella burnetii (strain RSA 493 / Nine Mile phase I).